Consider the following 86-residue polypeptide: Small ribosomal subunit protein bS16 (86 aa).

It belongs to the bacterial ribosomal protein bS16 family.

This chain is Small ribosomal subunit protein bS16, found in Borreliella burgdorferi (strain ATCC 35210 / DSM 4680 / CIP 102532 / B31) (Borrelia burgdorferi).